Reading from the N-terminus, the 130-residue chain is Small ribosomal subunit protein uS8 (130 aa).

It belongs to the universal ribosomal protein uS8 family. Part of the 30S ribosomal subunit.

Its function is as follows. One of the primary rRNA binding proteins, it binds directly to 16S rRNA central domain where it helps coordinate assembly of the platform of the 30S subunit. The chain is Small ribosomal subunit protein uS8 from Methanoregula boonei (strain DSM 21154 / JCM 14090 / 6A8).